Consider the following 70-residue polypeptide: VLIIAVLFLTACQLTTAETSSRGKQKHRALRSTDKNSKLTRGCTPPGGACGGHAHCCSQSCNILASTCNA.

A signal peptide spans 1 to 17; it reads VLIIAVLFLTACQLTTA. The propeptide occupies 18–41; that stretch reads ETSSRGKQKHRALRSTDKNSKLTR. Residues 19–41 form a disordered region; it reads TSSRGKQKHRALRSTDKNSKLTR. 3 cysteine pairs are disulfide-bonded: Cys-43–Cys-57, Cys-50–Cys-61, and Cys-56–Cys-68.

It belongs to the conotoxin O1 superfamily. In terms of tissue distribution, expressed by the venom duct.

Its subcellular location is the secreted. This chain is Conotoxin AbVIC, found in Conus abbreviatus (Abbreviated cone).